A 224-amino-acid chain; its full sequence is Transcription cofactor HES-6 (224 aa).

The segment at 1–31 is disordered; the sequence is MAPSQAPSRDRAGQEDEDRWEARGDRKARKP. The segment covering 8–25 has biased composition (basic and acidic residues); sequence SRDRAGQEDEDRWEARGD. A bHLH domain is found at 25 to 77; sequence DRKARKPLVEKKRRARINESLQELRLLLAGTEVQAKLENAEVLELTVRRVQGA. The region spanning 96 to 129 is the Orange domain; sequence FAAGYIQCMHEVHTFVSTCQAIDATVSAELLNHL. Residues 146–209 form a disordered region; that stretch reads GDSLAGLPGG…GPDLVSTSLG (64 aa). The segment covering 158 to 171 has biased composition (low complexity); that stretch reads RSSWPPGGSPESPL. Over residues 181 to 190 the composition is skewed to acidic residues; it reads LCSDLEEIPE. The WRPW motif motif lies at 221–224; sequence WRPW.

As to quaternary structure, transcription repression requires formation of a complex with a corepressor protein of the Groucho/TLE family. Interacts with HES1. In terms of tissue distribution, expressed in both undifferentiated and differentiated cells. High levels of expression are observed in several embryonic tissues including the nervous system, muscle and thymus. In the nervous system, initially expressed in the closing neural tube, then in the spinal cord, cranial and dorsal root ganglia, and brain neuroepithelium. Also expressed in epithelial cells of the embryonic respiratory, urinary and digestive systems. In the limb buds, expressed in skeletal muscle and presumptive tendons.

It localises to the nucleus. In terms of biological role, does not bind DNA itself but suppresses both HES1-mediated N box-dependent transcriptional repression and binding of HES1 to E box sequences. Also suppresses HES1-mediated inhibition of the heterodimer formed by ASCL1/MASH1 and TCF3/E47, allowing ASCL1 and TCF3 to up-regulate transcription in its presence. Promotes cell differentiation. This Mus musculus (Mouse) protein is Transcription cofactor HES-6.